Consider the following 360-residue polypeptide: sn-glycerol-3-phosphate import ATP-binding protein UgpC (360 aa).

The ABC transporter domain occupies 4–235 (LSLKGVRKSY…PATTFVASFI (232 aa)). 37-44 (GPSGCGKS) serves as a coordination point for ATP.

Belongs to the ABC transporter superfamily. sn-glycerol-3-phosphate importer (TC 3.A.1.1.3) family. In terms of assembly, the complex is composed of two ATP-binding proteins (UgpC), two transmembrane proteins (UgpA and UgpE) and a solute-binding protein (UgpB).

Its subcellular location is the cell inner membrane. It carries out the reaction sn-glycerol 3-phosphate(out) + ATP + H2O = sn-glycerol 3-phosphate(in) + ADP + phosphate + H(+). In terms of biological role, part of the ABC transporter complex UgpBAEC involved in sn-glycerol-3-phosphate (G3P) import. Responsible for energy coupling to the transport system. This chain is sn-glycerol-3-phosphate import ATP-binding protein UgpC, found in Burkholderia pseudomallei (strain 1710b).